Reading from the N-terminus, the 862-residue chain is MAKTNSYKKVIAGTMTAAMVAGIVSPVAAAGKSFPDVPAGHWAEGSINYLVDKGAITGKPDGTYGPTESIDRASAAVIFTKILNLPVDENAQPSFKDAKNIWSSKYIAAVEKAGVVKGDGKENFYPEGKIDRASFASMLVSAYNLKDKVNGELVTTFEDLLDHWGEEKANILINLGISVGTGGKWEPNKSVSRAEAAQFIALTDKKYGKKDNAQAYVTDVKVSEPTKLTLTGTGLDKLSADDVTLEGDKAVAIEASTDGTSAVVTLGGKVAPNKDLTVKVKNQSFVTKFVYEVKKLAVEKLTFDDDRAGQAIAFKLNDEKGNADVEYLNLANHDVKFVANNLDGSPANIFEGGEATSTTGKLAVGIKQGDYKVEVQVTKRGGLTVSNTGIITVKNLDTPASAIKNVVFALDADNDGVVNYGSKLSGKDFALNSQNLVVGEKASLNKLVATIAGEDKVVDPGSISIKSSNHGIISVVNNYITAEAAGEATLTIKVGDVTKDVKFKVTTDSRKLVSVKANPDKLQVVQNKTLPVTFVTTDQYGDPFGANTAAIKEVLPKTGVVAEGGLDVVTTDSGSIGTKTIGVTGNDVGEGTVHFQNGNGATLGSLYVNVTEGNVAFKNFELVSKVGQYGQSPDTKLDLNVSTTVEYQLSKYTSDRVYSDPENLEGYEVESKNLAVADAKIVGNKVVVTGKTPGKVDIHLTKNGATAGKATVEIVQETIAIKSVNFKPVQTENFVEKKINIGTVLELEKSNLDDIVKGINLTKETQHKVRVVKSGAEQGKLYLDRNGDAVFNAGDVKLGDVTVSQTSDSALPNFKADLYDTLTTKYTDKGTLVFKVLKDKDVITSEIGSQAVHVNVLNNPNL.

Positions Met-1–Ala-29 are cleaved as a signal peptide. SLH domains are found at residues Ala-30 to Pro-93, Ser-94 to Gly-151, and Glu-152 to Gln-214.

It is found in the secreted. The protein localises to the cell wall. It localises to the S-layer. Its function is as follows. The S-layer is a paracrystalline mono-layered assembly of proteins which coat the surface of bacteria. The protein is S-layer protein EA1 (eag) of Bacillus anthracis.